Reading from the N-terminus, the 212-residue chain is Ribonuclease HII (212 aa).

The 190-residue stretch at 20–209 (TCVVGVDEVG…VHNILYQEAS (190 aa)) folds into the RNase H type-2 domain. The a divalent metal cation site is built by aspartate 26, glutamate 27, and aspartate 117.

It belongs to the RNase HII family. It depends on Mn(2+) as a cofactor. Mg(2+) is required as a cofactor.

The protein localises to the cytoplasm. The enzyme catalyses Endonucleolytic cleavage to 5'-phosphomonoester.. Its function is as follows. Endonuclease that specifically degrades the RNA of RNA-DNA hybrids. The chain is Ribonuclease HII from Cereibacter sphaeroides (strain ATCC 17029 / ATH 2.4.9) (Rhodobacter sphaeroides).